Reading from the N-terminus, the 741-residue chain is Methionine--tRNA ligase (741 aa).

The short motif at proline 11–histidine 21 is the 'HIGH' region element. Zn(2+) is bound by residues cysteine 143, cysteine 146, cysteine 156, and cysteine 159. A 'KMSKS' region motif is present at residues lysine 345–serine 349. Threonine 348 is a binding site for ATP. The tRNA-binding domain occupies glutamate 641–arginine 741.

The protein belongs to the class-I aminoacyl-tRNA synthetase family. MetG type 1 subfamily. Homodimer. Zn(2+) is required as a cofactor.

It localises to the cytoplasm. It catalyses the reaction tRNA(Met) + L-methionine + ATP = L-methionyl-tRNA(Met) + AMP + diphosphate. Its function is as follows. Is required not only for elongation of protein synthesis but also for the initiation of all mRNA translation through initiator tRNA(fMet) aminoacylation. In Thermococcus kodakarensis (strain ATCC BAA-918 / JCM 12380 / KOD1) (Pyrococcus kodakaraensis (strain KOD1)), this protein is Methionine--tRNA ligase.